Here is a 739-residue protein sequence, read N- to C-terminus: Phosphoribosylformylglycinamidine synthase subunit PurL (739 aa).

Histidine 53 is an active-site residue. Residues tyrosine 56 and lysine 95 each contribute to the ATP site. Position 97 (glutamate 97) interacts with Mg(2+). Residues 98–101 (SHNH) and arginine 120 each bind substrate. Histidine 99 serves as the catalytic Proton acceptor. Aspartate 121 provides a ligand contact to Mg(2+). Glutamine 244 contacts substrate. Residue aspartate 274 participates in Mg(2+) binding. Residue 318-320 (ESQ) participates in substrate binding. Residues aspartate 501 and glycine 538 each coordinate ATP. Asparagine 539 lines the Mg(2+) pocket. Substrate is bound at residue serine 541.

Belongs to the FGAMS family. As to quaternary structure, monomer. Part of the FGAM synthase complex composed of 1 PurL, 1 PurQ and 2 PurS subunits.

The protein resides in the cytoplasm. It catalyses the reaction N(2)-formyl-N(1)-(5-phospho-beta-D-ribosyl)glycinamide + L-glutamine + ATP + H2O = 2-formamido-N(1)-(5-O-phospho-beta-D-ribosyl)acetamidine + L-glutamate + ADP + phosphate + H(+). The protein operates within purine metabolism; IMP biosynthesis via de novo pathway; 5-amino-1-(5-phospho-D-ribosyl)imidazole from N(2)-formyl-N(1)-(5-phospho-D-ribosyl)glycinamide: step 1/2. Part of the phosphoribosylformylglycinamidine synthase complex involved in the purines biosynthetic pathway. Catalyzes the ATP-dependent conversion of formylglycinamide ribonucleotide (FGAR) and glutamine to yield formylglycinamidine ribonucleotide (FGAM) and glutamate. The FGAM synthase complex is composed of three subunits. PurQ produces an ammonia molecule by converting glutamine to glutamate. PurL transfers the ammonia molecule to FGAR to form FGAM in an ATP-dependent manner. PurS interacts with PurQ and PurL and is thought to assist in the transfer of the ammonia molecule from PurQ to PurL. The protein is Phosphoribosylformylglycinamidine synthase subunit PurL of Listeria innocua serovar 6a (strain ATCC BAA-680 / CLIP 11262).